A 483-amino-acid polypeptide reads, in one-letter code: Rhamnulokinase (483 aa).

Residue 11 to 15 (ASSGR) participates in ATP binding. Substrate is bound by residues G79 and 234-236 (HDT). Residue D235 is the Proton acceptor of the active site. ATP is bound at residue T257. Residue N294 coordinates substrate. Q302 contributes to the ATP binding site. A disulfide bridge connects residues C352 and C369. Residue G401 participates in ATP binding.

It belongs to the rhamnulokinase family. Mg(2+) serves as cofactor.

It catalyses the reaction L-rhamnulose + ATP = L-rhamnulose 1-phosphate + ADP + H(+). The protein operates within carbohydrate degradation; L-rhamnose degradation; glycerone phosphate from L-rhamnose: step 2/3. Its function is as follows. Involved in the catabolism of L-rhamnose (6-deoxy-L-mannose). Catalyzes the transfer of the gamma-phosphate group from ATP to the 1-hydroxyl group of L-rhamnulose to yield L-rhamnulose 1-phosphate. This is Rhamnulokinase from Listeria monocytogenes serovar 1/2a (strain ATCC BAA-679 / EGD-e).